Here is a 252-residue protein sequence, read N- to C-terminus: GPI alpha-1,4-mannosyltransferase I, stabilizing subunit (252 aa).

Positions 1–22 are cleaved as a signal peptide; the sequence is MAASALAWLLLWAAGLVGRLAA. N-linked (GlcNAc...) asparagine glycosylation is found at Asn-97 and Asn-209. The helical transmembrane segment at 225–245 threads the bilayer; the sequence is VCSVTLLITVLCSTLILLAVF.

It belongs to the PIGX family. As to quaternary structure, part of the glycosylphosphatidylinositol-mannosyltransferase I complex that is composed of PIGM and PIGX. Interacts with PIGM; PIGX stabilizes PIGM.

Its subcellular location is the endoplasmic reticulum membrane. It participates in glycolipid biosynthesis; glycosylphosphatidylinositol-anchor biosynthesis. Its function is as follows. Stabilizing subunit of the glycosylphosphatidylinositol-mannosyltransferase I complex which catalyzes the transfer of the first mannose, via an alpha-1,4 bond from a dolichol-phosphate-mannose (Dol-P-Man) to the glucosaminyl acyl phosphatidylinositol (GlcN-(acyl)PI) intermediate to generate alpha-D-Man-(1-&gt;4)-alpha-D-GlcN-(1-&gt;6)-(1-radyl,2-acyl-sn-glycero-3-phospho)-2-acyl-inositol and participates in the sixth step of the glycosylphosphatidylinositol-anchor biosynthesis. Probably acts by stabilizing the mannosyltransferase PIGM. In Rattus norvegicus (Rat), this protein is GPI alpha-1,4-mannosyltransferase I, stabilizing subunit.